The primary structure comprises 500 residues: Glucose-6-phosphate isomerase (500 aa).

The active-site Proton donor is the glutamate 332. Active-site residues include histidine 363 and lysine 473.

The protein belongs to the GPI family.

Its subcellular location is the cytoplasm. The catalysed reaction is alpha-D-glucose 6-phosphate = beta-D-fructose 6-phosphate. The protein operates within carbohydrate biosynthesis; gluconeogenesis. Its pathway is carbohydrate degradation; glycolysis; D-glyceraldehyde 3-phosphate and glycerone phosphate from D-glucose: step 2/4. In terms of biological role, catalyzes the reversible isomerization of glucose-6-phosphate to fructose-6-phosphate. This chain is Glucose-6-phosphate isomerase, found in Rhizorhabdus wittichii (strain DSM 6014 / CCUG 31198 / JCM 15750 / NBRC 105917 / EY 4224 / RW1) (Sphingomonas wittichii).